The chain runs to 432 residues: Glucose-6-phosphate isomerase (432 aa).

Catalysis depends on glutamate 283, which acts as the Proton donor. Active-site residues include histidine 304 and lysine 418.

Belongs to the GPI family.

It is found in the cytoplasm. It carries out the reaction alpha-D-glucose 6-phosphate = beta-D-fructose 6-phosphate. It functions in the pathway carbohydrate biosynthesis; gluconeogenesis. The protein operates within carbohydrate degradation; glycolysis; D-glyceraldehyde 3-phosphate and glycerone phosphate from D-glucose: step 2/4. In terms of biological role, catalyzes the reversible isomerization of glucose-6-phosphate to fructose-6-phosphate. The polypeptide is Glucose-6-phosphate isomerase (Rubrobacter xylanophilus (strain DSM 9941 / JCM 11954 / NBRC 16129 / PRD-1)).